The primary structure comprises 274 residues: Rhamnulose-1-phosphate aldolase (274 aa).

Glu-117 is an active-site residue. Residues His-141, His-143, and His-212 each contribute to the Zn(2+) site.

This sequence belongs to the aldolase class II family. RhaD subfamily. Homotetramer. The cofactor is Zn(2+).

The protein resides in the cytoplasm. It carries out the reaction L-rhamnulose 1-phosphate = (S)-lactaldehyde + dihydroxyacetone phosphate. It functions in the pathway carbohydrate degradation; L-rhamnose degradation; glycerone phosphate from L-rhamnose: step 3/3. In terms of biological role, catalyzes the reversible cleavage of L-rhamnulose-1-phosphate to dihydroxyacetone phosphate (DHAP) and L-lactaldehyde. This is Rhamnulose-1-phosphate aldolase from Escherichia coli O17:K52:H18 (strain UMN026 / ExPEC).